A 3678-amino-acid chain; its full sequence is Dystrophin (3678 aa).

The segment at 1 to 240 (MLWWEEVEDC…YITSLFQVLP (240 aa)) is actin-binding. Calponin-homology (CH) domains follow at residues 15 to 119 (DVQK…LHWQ) and 134 to 240 (TNSE…QVLP). Residues 63-72 (PKEKGSTRVH) form an ANK2- and ANK-3 binding region. The interval 313 to 333 (DSTQSPYPSQHLEAPRDKSLD) is disordered. Spectrin repeat units follow at residues 341 to 449 (VNLD…KLHK), 450 to 558 (VLMD…VLQD), 561 to 669 (LKWQ…QISQ), 721 to 830 (ELRK…WLEY), 832 to 936 (TNII…ELQT), 945 to 1047 (RYQE…KLEE), 1050 to 1156 (NKLR…ALKA), 1159 to 1265 (DKTV…TLEE), 1268 to 1369 (ACWH…LLEQ), 1370 to 1465 (SIQS…LFQK), 1470 to 1570 (EQRL…QLEK), 1573 to 1678 (KLSR…LLLE), 1681 to 1780 (KHME…KASI), 1781 to 1876 (PLKE…KALE), 1879 to 1981 (HQWY…TLHE), 1994 to 2103 (DVSY…RFDR), 2106 to 2210 (EKWR…RIEE), 2213 to 2318 (NVLS…ELEV), 2319 to 2416 (HLKD…LRTK), 2468 to 2570 (FNRA…QLNE), 2573 to 2679 (KDST…ALEE), 2682 to 2795 (RLLQ…HLEA), 2801 to 2923 (KRLH…RKID), and 2928 to 3033 (RLQE…QLHE). The interaction with SYNM stretch occupies residues 1417 to 1915 (SDLTSHEISL…PEPRDERKLK (499 aa)). In terms of domain architecture, WW spans 3048-3081 (TSVQGPWERAISPNKVPYYINHETQTTCWDHPKM). Residues 3051–3401 (QGPWERAISP…TVLEGDNMET (351 aa)) are interaction with SYNM. The ZZ-type; degenerate zinc-finger motif lies at 3301 to 3357 (KHQAKCNICKECPIIGFRYRSLKHFNYDICQSCFFSGRVAKGHKMHYPMVEYCTPTT). Residues C3306, C3309, C3330, and C3333 each coordinate Zn(2+). Residues 3459–3511 (DDEHLLIQHYCQSLNQDSPLSQPRSPAQILISLESEERGELERILADLEEENR) form a binds to SNTB1 region. 3 positions are modified to phosphoserine: S3476, S3483, and S3493. Disordered regions lie at residues 3521–3547 (KQQH…QSPR) and 3596–3678 (EAKV…EDTM). Composition is skewed to polar residues over residues 3600–3619 (NGTT…SSQP) and 3655–3665 (QLNNSFPSSRG). Phosphoserine is present on residues S3605, S3606, S3610, S3616, S3617, and S3659.

As to quaternary structure, interacts with SYNM. Interacts with the syntrophins SNTG1 and SNTG2. Interacts with KRT19. Component of the dystrophin-associated glycoprotein complex which is composed of three subcomplexes: a cytoplasmic complex comprised of DMD (or UTRN), DTNA and a number of syntrophins, such as SNTB1, SNTB2, SNTG1 and SNTG2, the transmembrane dystroglycan complex, and the sarcoglycan-sarcospan complex. Interacts with DAG1 (betaDAG1) with DMD; the interaction is inhibited by phosphorylation on the PPXY motif of DAG1. Interacts with SYNM; SNTA1 and SNTB1. Interacts with CMYA5. Directly interacts with ANK2 and ANK3; these interactions do not interfere with betaDAG1-binding and are necessary for proper localization in muscle cells. Identified in a dystroglycan complex that contains at least PRX, DRP2, UTRN, DMD and DAG1. Interacts with DTNB. Interacts with PGM5; the interaction is direct. Interacts with NOS1; localizes NOS1 to sarcolemma in muscle cells. In terms of tissue distribution, detected in quadriceps muscle and in sciatic nerve (at protein level). Expressed in the sarcolemma of the soleus muscle (at protein level). Differentially expressed during skeletal muscle, heart, and brain development. Also expressed in retina.

The protein resides in the cell membrane. Its subcellular location is the sarcolemma. It localises to the cytoplasm. It is found in the cytoskeleton. The protein localises to the postsynaptic cell membrane. Anchors the extracellular matrix to the cytoskeleton via F-actin. Ligand for dystroglycan. Component of the dystrophin-associated glycoprotein complex which accumulates at the neuromuscular junction (NMJ) and at a variety of synapses in the peripheral and central nervous systems and has a structural function in stabilizing the sarcolemma. Also implicated in signaling events and synaptic transmission. The protein is Dystrophin (Dmd) of Mus musculus (Mouse).